A 285-amino-acid polypeptide reads, in one-letter code: Polyamine aminopropyltransferase (285 aa).

A PABS domain is found at 5–241 (QDWFTESYPD…GWWSATMAGK (237 aa)). Gln35 contacts S-methyl-5'-thioadenosine. Positions 66 and 90 each coordinate spermidine. S-methyl-5'-thioadenosine is bound by residues Asp110 and 141 to 142 (DG). Asp160 functions as the Proton acceptor in the catalytic mechanism. 160–163 (DSTD) provides a ligand contact to spermidine. Pro167 is an S-methyl-5'-thioadenosine binding site.

It belongs to the spermidine/spermine synthase family. Homodimer or homotetramer.

Its subcellular location is the cytoplasm. It catalyses the reaction S-adenosyl 3-(methylsulfanyl)propylamine + putrescine = S-methyl-5'-thioadenosine + spermidine + H(+). It functions in the pathway amine and polyamine biosynthesis; spermidine biosynthesis; spermidine from putrescine: step 1/1. In terms of biological role, catalyzes the irreversible transfer of a propylamine group from the amino donor S-adenosylmethioninamine (decarboxy-AdoMet) to putrescine (1,4-diaminobutane) to yield spermidine. In Methylococcus capsulatus (strain ATCC 33009 / NCIMB 11132 / Bath), this protein is Polyamine aminopropyltransferase.